A 329-amino-acid chain; its full sequence is Ribosomal RNA small subunit methyltransferase C (329 aa).

This sequence belongs to the methyltransferase superfamily. RsmC family. Monomer.

The protein resides in the cytoplasm. The catalysed reaction is guanosine(1207) in 16S rRNA + S-adenosyl-L-methionine = N(2)-methylguanosine(1207) in 16S rRNA + S-adenosyl-L-homocysteine + H(+). Functionally, specifically methylates the guanine in position 1207 of 16S rRNA in the 30S particle. In Actinobacillus pleuropneumoniae serotype 3 (strain JL03), this protein is Ribosomal RNA small subunit methyltransferase C.